A 385-amino-acid chain; its full sequence is MMKIAATLLATIALATVNALDNGLALTPQMGWSSWNFYACNINESVIMNTAKAMVSNGMADAGYTYVNIDDCWAGGRYPNGTVYADPTNFPNGIKYVADYIHSLGLKIGIYTDAGTETCQKRVGSYGYEANDAQTYAEWGIDYVKEDWCYATLENPQQRYQIMSQALNATGRPMFFSLCDWGYENPWTFGMSVGNSWRTTPDIKDNWDSMLSNLMAQAPITSFSGIGGFNDPDMMMVGNGGMSNTEYVSHFSLWSLLNAPLIAGCDLIDIDQETLSILTASEVIAINQDPLGVQGSLVKSYNGGLQQIWAKPLSNGARAVVLFNTDTNPATIELLWGNIWMEPSQQLSIRNLWTQTNLGTFTESYESDSLIPPHGCIMLTLTPTN.

The signal sequence occupies residues 1 to 19 (MMKIAATLLATIALATVNA). 2 cysteine pairs are disulfide-bonded: cysteine 40-cysteine 72 and cysteine 119-cysteine 149. Catalysis depends on aspartate 147, which acts as the Nucleophile. 180 to 184 (DWGYE) contacts substrate. Aspartate 202 functions as the Proton donor in the catalytic mechanism.

The protein belongs to the glycosyl hydrolase 27 family.

It catalyses the reaction Hydrolysis of terminal, non-reducing alpha-D-galactose residues in alpha-D-galactosides, including galactose oligosaccharides, galactomannans and galactolipids.. In Dictyostelium discoideum (Social amoeba), this protein is Probable alpha-galactosidase (melA).